We begin with the raw amino-acid sequence, 3898 residues long: Genome polyprotein (3898 aa).

Residues 1–168 (MELNHFELLY…TDCPLWVTSC (168 aa)) enclose the Peptidase C53 domain. Active-site for N-terminal protease activity residues include E22, H49, and C69. The segment at 112 to 138 (CEVTKRIGRVTGSDGKLYHIYVCIDGC) is zinc-binding TRASH domain. A glycan (N-linked (GlcNAc...) asparagine; by host) is linked at N157. A disordered region spans residues 221-242 (KGKVKGKNTQDGLYHNKNKPPE). Residues N269, N278, and N332 are each glycosylated (N-linked (GlcNAc...) asparagine; by host). 2 disulfides stabilise this stretch: C305/C349 and C335/C336. N-linked (GlcNAc...) asparagine; by host glycosylation is found at N362 and N367. Disulfide bonds link C377/C422 and C381/C405. Residues N410, N425, N500, and N594 are each glycosylated (N-linked (GlcNAc...) asparagine; by host). An intrachain disulfide couples C693 to C737. N-linked (GlcNAc...) asparagine; by host glycosylation is found at N805, N810, N874, N918, and N949. 9 helical membrane-spanning segments follow: residues 1031–1051 (FIVL…LIVT), 1070–1090 (VVLI…YFLL), 1104–1124 (ILLL…VALL), 1140–1164 (QRLP…MLLA), 1189–1209 (LSTD…TYIS), 1217–1237 (LLQY…LKGV), 1247–1267 (LPSY…AVVT), 1281–1301 (VPTL…ILIL), and 1360–1380 (TMLP…WQFI). The Peptidase C74 domain occupies 1441–1589 (KELIIKHKVR…DLEHLGWVLR (149 aa)). Catalysis depends on for cysteine protease NS2 activity residues H1447, E1461, and C1512. A helical transmembrane segment spans residues 1568–1588 (MLLVGNLGTEVGDLEHLGWVL). A Peptidase S31 domain is found at 1590–1763 (GPAVCKKVTE…LPIFEASSGR (174 aa)). Residues H1658 and D1695 each act as charge relay system; for serine protease NS3 activity in the active site. N1713 carries N-linked (GlcNAc...) asparagine; by host glycosylation. The Charge relay system; for serine protease NS3 activity role is filled by S1752. In terms of domain architecture, Helicase ATP-binding spans 1802 to 1960 (ITTMNRGEFR…QKHPIEEYIA (159 aa)). ATP is bound at residue 1815 to 1822 (LATGAGKT). Residues 1910–1913 (DEYH) carry the DEAH box motif. In terms of domain architecture, Helicase C-terminal spans 1978 to 2179 (GLKIPVEEMK…ELPMAVKNIM (202 aa)). N2134, N2217, N2419, N2494, N2787, N2815, and N2891 each carry an N-linked (GlcNAc...) asparagine; by host glycan. Positions 2968–2980 (PTMTTGETPTTFT) are enriched in low complexity. The interval 2968 to 2987 (PTMTTGETPTTFTSSGPDPK) is disordered. N-linked (GlcNAc...) asparagine; by host glycosylation is found at N3103, N3211, and N3316. GTP is bound by residues T3500 and L3502. In terms of domain architecture, RdRp catalytic spans 3519–3642 (PVAVSFDTKA…ITERALGEKF (124 aa)). The N-linked (GlcNAc...) asparagine; by host glycan is linked to N3689. R3697 contacts GTP. N-linked (GlcNAc...) asparagine; by host glycosylation is present at N3698. K3705 is a binding site for GTP. N-linked (GlcNAc...) asparagine; by host glycosylation is present at N3794.

It belongs to the pestivirus polyprotein family. Interacts (via N-terminus) with host SP1; this interaction induces proteasomal degradation of SP1 with subsequent down-regulation of HDAC1 and ISG15 expression thereby counteracting the host innate immunity. Interacts (via C-terminus) with host IRF3. In terms of assembly, interacts with host OS9. As to quaternary structure, homodimer; disulfide-linked. Interacts with host RPSA. Homodimer; disulfide-linked. Heterodimer with E1; disulfide-linked. In terms of assembly, homodimer; disulfide-linked. Heterodimer with E1; disulfide-linked. Interacts with host TRX2. Interacts with host receptor ADAM17 (via metalloproteinase domain); this interaction allows binding and probably entry of the virus into the host cell. Interacts with host ANXA2; this interaction allows binding and probably entry of the virus into the host cell. Interacts with host MERTK; this interaction allows binding and probably entry of the virus into the host cell. As to quaternary structure, interacts with host TRAF6; this interaction inhibits host NF-kappa-B pathway. Interacts with NS5B; this interaction enhances RNA-dependent RNA polymerase activity. Interacts with protein NS4A. Interacts with host RAB5, this interaction facilitates the formation of NS4B-related complex. Interacts with host FTH1; this interaction plays a positive role in viral anti-apoptosis. In terms of assembly, interacts with RNA-directed RNA polymerase. Interacts with host RSAD2; this interaction inhibits viral replication. As to quaternary structure, interacts with NS5A; this interaction promotes viral replication. Post-translationally, heavily glycosylated. In terms of processing, the viral RNA of pestiviruses is expressed as a single polyprotein which undergoes post-translational proteolytic processing resulting in the production of at least eleven individual proteins. The N-terminal protease cleaves itself from the nascent polyprotein autocatalytically and thereby generates the N-terminus of the adjacent viral capsid protein C. Cleavage between E2 and p7 is partial.

It localises to the virion. The protein localises to the host membrane. It is found in the virion membrane. The protein resides in the host cell surface. Its subcellular location is the host cytoplasm. It carries out the reaction Leu is conserved at position P1 for all four cleavage sites. Alanine is found at position P1' of the NS4A-NS4B cleavage site, whereas serine is found at position P1' of the NS3-NS4A, NS4B-NS5A and NS5A-NS5B cleavage sites.. The enzyme catalyses RNA(n) + a ribonucleoside 5'-triphosphate = RNA(n+1) + diphosphate. The catalysed reaction is a ribonucleoside 5'-triphosphate + H2O = a ribonucleoside 5'-diphosphate + phosphate + H(+). It catalyses the reaction ATP + H2O = ADP + phosphate + H(+). In terms of biological role, leader cysteine autoprotease that cleaves itself from the nascent polyprotein during translation of the viral mRNA. Once released, plays a role in the inhibition of host innate immune response by interacting with host IRF3 and inducing its proteasomal degradation. Functionally, packages viral RNA to form a viral nucleocapsid and thereby protects viral RNA. Also plays a role in transcription regulation. Protects the incoming virus against IFN-induced effectors. Plays a role in viral entry. Interacts with host RPSA that acts as a cellular attachment receptor for the virus. Also possesses intrinsic ribonuclease (RNase) activity that can inhibit the production of type I interferon and assist in the development of persistent infections. Cleaves preferentially NpU bonds. Binds to heparan sulfate on the host cells for entry. Its function is as follows. Plays a role in cell attachment and subsequent fusion of viral and cellular membranes. Therefore, mediates together with envelope glycoprotein E2 the viral entry. In terms of biological role, plays a role in cell attachment and subsequent fusion of viral and cellular membranes. Therefore, mediates together with envelope glycoprotein E1 the viral entry. Binds to host ADAM17 receptor for entry. Binds to host ANXA2 for entry. Binds to host MERTK for entry. Functionally, plays an essential role in the virus replication cycle by acting as a viroporin. Forms ion conductive pores, which alters the cell permeability allowing the transport of ions and other small molecules. Autoprotease that associates with the host chaperone JIV and cleaves the NS2-3 protein between NS2 and NS3. Also plays a role in the formation of infectious particles. Its function is as follows. Plays a role in the regulation of viral RNA replication. In terms of biological role, multifunctional protein that contains an N-terminal protease and a C-terminal helicase, playing essential roles in viral polyprotein processing and viral genome replication. The chymotrypsin-like serine protease activity utilizes NS4A as an essential cofactor and catalyzes the cleavage of the polyprotein leading to the release of NS4A, NS4B, NS5A, and NS5B. Plays a role in the inhibition of host NF-kappa-B activation by interacting with and inhibiting host TRAF6. Interacts with NS5B to enhance RNA-dependent RNA polymerase activity. Functionally, acts as a cofactor for the NS3 protease activity. Induces a specific membrane alteration that serves as a scaffold for the virus replication complex. Antagonizes host cell apoptosis by interacting with host ferritin heavy chain. The ORF4 protein physically binds host FTH1/FHC, resulting in the reduction of FTH1 protein levels in host cells. Reduction of FTH1 concentration further inhibits the accumulation of reactive oxygen in host cells, leading to reduced apoptosis. Its function is as follows. Regulates viral RNA replication by interacting with the 3'-untranslated region of viral RNA in a dose-dependent manner. At small concentrations promotes viral synthesis by interacting with the polymerase NS5B while at large concentrations, inhibits replication. In terms of biological role, replicates the viral (+) and (-) genome. The polypeptide is Genome polyprotein (Sus scrofa (Pig)).